Consider the following 380-residue polypeptide: Chaperone protein DnaJ (380 aa).

The J domain maps to 4–68 (DFYSVLGVSR…EKRRMYDQMG (65 aa)). Basic and acidic residues predominate over residues 27–87 (KASEYHPDVS…RGATDTDRGR (61 aa)). The disordered stretch occupies residues 27–126 (KASEYHPDVS…SRSGPRQGSD (100 aa)). The span at 88–100 (GGMGGMGGGGMGG) shows a compositional bias: gly residues. The segment covering 115–124 (SQSRSGPRQG) has biased composition (low complexity). The CR-type zinc-finger motif lies at 141–223 (GVTKQLTVTR…CRGDGQVRNE (83 aa)). Zn(2+) contacts are provided by C154, C157, C171, C174, C197, C200, C211, and C214. 4 CXXCXGXG motif repeats span residues 154–161 (CPDCDGAG), 171–178 (CSACDGRG), 197–204 (CPQCDGKG), and 211–218 (CSTCRGDG).

It belongs to the DnaJ family. Homodimer. Zn(2+) serves as cofactor.

The protein localises to the cytoplasm. In terms of biological role, participates actively in the response to hyperosmotic and heat shock by preventing the aggregation of stress-denatured proteins and by disaggregating proteins, also in an autonomous, DnaK-independent fashion. Unfolded proteins bind initially to DnaJ; upon interaction with the DnaJ-bound protein, DnaK hydrolyzes its bound ATP, resulting in the formation of a stable complex. GrpE releases ADP from DnaK; ATP binding to DnaK triggers the release of the substrate protein, thus completing the reaction cycle. Several rounds of ATP-dependent interactions between DnaJ, DnaK and GrpE are required for fully efficient folding. Also involved, together with DnaK and GrpE, in the DNA replication of plasmids through activation of initiation proteins. The protein is Chaperone protein DnaJ of Natronomonas pharaonis (strain ATCC 35678 / DSM 2160 / CIP 103997 / JCM 8858 / NBRC 14720 / NCIMB 2260 / Gabara) (Halobacterium pharaonis).